The chain runs to 269 residues: Imidazole glycerol phosphate synthase subunit HisF (269 aa).

Residues Asp23 and Asp142 contribute to the active site.

Belongs to the HisA/HisF family. Heterodimer of HisH and HisF.

It localises to the cytoplasm. The catalysed reaction is 5-[(5-phospho-1-deoxy-D-ribulos-1-ylimino)methylamino]-1-(5-phospho-beta-D-ribosyl)imidazole-4-carboxamide + L-glutamine = D-erythro-1-(imidazol-4-yl)glycerol 3-phosphate + 5-amino-1-(5-phospho-beta-D-ribosyl)imidazole-4-carboxamide + L-glutamate + H(+). Its pathway is amino-acid biosynthesis; L-histidine biosynthesis; L-histidine from 5-phospho-alpha-D-ribose 1-diphosphate: step 5/9. In terms of biological role, IGPS catalyzes the conversion of PRFAR and glutamine to IGP, AICAR and glutamate. The HisF subunit catalyzes the cyclization activity that produces IGP and AICAR from PRFAR using the ammonia provided by the HisH subunit. The chain is Imidazole glycerol phosphate synthase subunit HisF from Bordetella pertussis (strain Tohama I / ATCC BAA-589 / NCTC 13251).